Consider the following 539-residue polypeptide: Glutamyl-tRNA(Gln) amidotransferase subunit B, mitochondrial (539 aa).

The protein belongs to the GatB/GatE family. GatB subfamily. As to quaternary structure, subunit of the heterotrimeric GatFAB amidotransferase (AdT) complex, composed of A, B and F subunits.

The protein resides in the mitochondrion. The enzyme catalyses L-glutamyl-tRNA(Gln) + L-glutamine + ATP + H2O = L-glutaminyl-tRNA(Gln) + L-glutamate + ADP + phosphate + H(+). Its function is as follows. Allows the formation of correctly charged Gln-tRNA(Gln) through the transamidation of misacylated Glu-tRNA(Gln) in the mitochondria. The reaction takes place in the presence of glutamine and ATP through an activated gamma-phospho-Glu-tRNA(Gln). The sequence is that of Glutamyl-tRNA(Gln) amidotransferase subunit B, mitochondrial from Kluyveromyces lactis (strain ATCC 8585 / CBS 2359 / DSM 70799 / NBRC 1267 / NRRL Y-1140 / WM37) (Yeast).